We begin with the raw amino-acid sequence, 432 residues long: Cytochrome c biogenesis protein CcsB (432 aa).

3 helical membrane-spanning segments follow: residues 14 to 34 (LRIA…GTAI), 72 to 92 (SSWF…CSWR), and 162 to 182 (VGPM…VWGS).

This sequence belongs to the Ccs1/CcsB family. May interact with CcsA.

The protein localises to the cellular thylakoid membrane. Its function is as follows. Required during biogenesis of c-type cytochromes (cytochrome c6 and cytochrome f) at the step of heme attachment. In Prochlorococcus marinus (strain MIT 9303), this protein is Cytochrome c biogenesis protein CcsB.